We begin with the raw amino-acid sequence, 290 residues long: 4-hydroxy-tetrahydrodipicolinate synthase (290 aa).

Threonine 44 is a binding site for pyruvate. The Proton donor/acceptor role is filled by tyrosine 132. Lysine 160 (schiff-base intermediate with substrate) is an active-site residue. Isoleucine 202 contributes to the pyruvate binding site.

The protein belongs to the DapA family. In terms of assembly, homotetramer; dimer of dimers.

It localises to the cytoplasm. The enzyme catalyses L-aspartate 4-semialdehyde + pyruvate = (2S,4S)-4-hydroxy-2,3,4,5-tetrahydrodipicolinate + H2O + H(+). The protein operates within amino-acid biosynthesis; L-lysine biosynthesis via DAP pathway; (S)-tetrahydrodipicolinate from L-aspartate: step 3/4. Functionally, catalyzes the condensation of (S)-aspartate-beta-semialdehyde [(S)-ASA] and pyruvate to 4-hydroxy-tetrahydrodipicolinate (HTPA). This is 4-hydroxy-tetrahydrodipicolinate synthase from Geobacter sulfurreducens (strain ATCC 51573 / DSM 12127 / PCA).